The following is a 702-amino-acid chain: Phosphoglycerol transferase I (702 aa).

3 helical membrane passes run 3–25 (WILA…LAWL), 73–95 (GYIA…LRVR), and 102–124 (GGGA…SPLY).

This sequence belongs to the OpgB family.

It is found in the cell inner membrane. The enzyme catalyses a phosphatidylglycerol + a membrane-derived-oligosaccharide D-glucose = a 1,2-diacyl-sn-glycerol + a membrane-derived-oligosaccharide 6-(glycerophospho)-D-glucose.. It functions in the pathway glycan metabolism; osmoregulated periplasmic glucan (OPG) biosynthesis. Its function is as follows. Transfers a phosphoglycerol residue from phosphatidylglycerol to the membrane-bound nascent glucan backbones. This is Phosphoglycerol transferase I from Xanthomonas campestris pv. campestris (strain ATCC 33913 / DSM 3586 / NCPPB 528 / LMG 568 / P 25).